A 190-amino-acid polypeptide reads, in one-letter code: Putative manganese efflux pump MntP (190 aa).

Transmembrane regions (helical) follow at residues 5-25 (ALLALAVALAMDALAVAVATG), 41-61 (WHFGLFQAAMPIAGWFMGQGI), 64-84 (FVDAWAHWIAFGLLAFIGLKM), 105-125 (TSLIMLSVATSIDALAVGVTL), 127-147 (MLGLSIWMPAAVIGLVCLGLT), and 169-189 (ILGGAVLLGIGFKILHESGVF).

This sequence belongs to the MntP (TC 9.B.29) family.

It localises to the cell inner membrane. In terms of biological role, probably functions as a manganese efflux pump. In Oleidesulfovibrio alaskensis (strain ATCC BAA-1058 / DSM 17464 / G20) (Desulfovibrio alaskensis), this protein is Putative manganese efflux pump MntP.